Consider the following 157-residue polypeptide: 2-C-methyl-D-erythritol 2,4-cyclodiphosphate synthase (157 aa).

A divalent metal cation contacts are provided by aspartate 8 and histidine 10. Residues 8-10 and 34-35 contribute to the 4-CDP-2-C-methyl-D-erythritol 2-phosphate site; these read DVH and HS. An a divalent metal cation-binding site is contributed by histidine 42. 4-CDP-2-C-methyl-D-erythritol 2-phosphate contacts are provided by residues 56–58, 61–65, 100–106, 132–135, phenylalanine 139, and arginine 142; these read DIG, FPDTD, AQAPKMA, and TTTE.

It belongs to the IspF family. Homotrimer. It depends on a divalent metal cation as a cofactor.

The enzyme catalyses 4-CDP-2-C-methyl-D-erythritol 2-phosphate = 2-C-methyl-D-erythritol 2,4-cyclic diphosphate + CMP. It functions in the pathway isoprenoid biosynthesis; isopentenyl diphosphate biosynthesis via DXP pathway; isopentenyl diphosphate from 1-deoxy-D-xylulose 5-phosphate: step 4/6. In terms of biological role, involved in the biosynthesis of isopentenyl diphosphate (IPP) and dimethylallyl diphosphate (DMAPP), two major building blocks of isoprenoid compounds. Catalyzes the conversion of 4-diphosphocytidyl-2-C-methyl-D-erythritol 2-phosphate (CDP-ME2P) to 2-C-methyl-D-erythritol 2,4-cyclodiphosphate (ME-CPP) with a corresponding release of cytidine 5-monophosphate (CMP). The sequence is that of 2-C-methyl-D-erythritol 2,4-cyclodiphosphate synthase from Ectopseudomonas mendocina (strain ymp) (Pseudomonas mendocina).